The following is a 785-amino-acid chain: Potassium transporter 5 (785 aa).

Topologically, residues 1 to 60 (MDGEEHQIDGDEVNNHENKLNEKKKSWGKLYRPDSFIIEAGQTPTNTGRRSLMSWRTTMS) are cytoplasmic. Phosphoserine is present on Ser35. Residues 61–81 (LAFQSLGVVYGDIGTSPLYVY) traverse the membrane as a helical segment. The Extracellular segment spans residues 82-97 (ASTFTDGINDKDDVVG). Residues 98-118 (VLSLIIYTITLVALLKYVFIV) form a helical membrane-spanning segment. The Cytoplasmic segment spans residues 119–184 (LQANDNGEGG…EKLENSKFAK (66 aa)). The helical transmembrane segment at 185–205 (IILFLVTIMGTSMVIGDGILT) threads the bilayer. Over 206–218 (PSISVLSAVSGIK) the chain is Extracellular. The chain crosses the membrane as a helical span at residues 219–239 (SLGQNTVVGVSVAILIVLFAF). Over 240-247 (QRFGTDKV) the chain is Cytoplasmic. The chain crosses the membrane as a helical span at residues 248-268 (GFSFAPIILVWFTFLIGIGLF). The Extracellular segment spans residues 269-297 (NLFKHDITVLKALNPLYIIYYFRRTGRQG). Residues 298–318 (WISLGGVFLCITGTEAMFADL) traverse the membrane as a helical segment. The Cytoplasmic segment spans residues 319 to 327 (GHFSVRAVQ). A helical membrane pass occupies residues 328–348 (ISFSCVAYPALVTIYCGQAAY). The Extracellular portion of the chain corresponds to 349–367 (LTKHTYNVSNTFYDSIPDP). A glycan (N-linked (GlcNAc...) asparagine) is linked at Asn355. The chain crosses the membrane as a helical span at residues 368 to 388 (LYWPTFVVAVAASIIASQAMI). At 389-419 (SGAFSVISQSLRMGCFPRVKVVHTSAKYEGQ) the chain is on the cytoplasmic side. Residues 420 to 440 (VYIPEINYLLMLACIAVTLAF) form a helical membrane-spanning segment. Topologically, residues 441–451 (RTTEKIGHAYG) are extracellular. Residues 452-472 (IAVVTVMVITTLMVTLIMLVI) traverse the membrane as a helical segment. Topologically, residues 473–476 (WKTN) are cytoplasmic. Residues 477–497 (IVWIAIFLVVFGSIEMLYLSS) traverse the membrane as a helical segment. At 498-501 (VMYK) the chain is on the extracellular side. Residues 502–522 (FTSGGYLPLTITVVLMAMMAI) form a helical membrane-spanning segment. Over 523–785 (WQYVHVLKYR…LLKVGMTYEL (263 aa)) the chain is Cytoplasmic. Residues 660-699 (GGEVDETDKEEEPNAETTVVPSSNYVPSSGRIGSAHSSSS) are disordered. Acidic residues predominate over residues 662 to 673 (EVDETDKEEEPN). Polar residues predominate over residues 674–686 (AETTVVPSSNYVP). The segment covering 687 to 697 (SSGRIGSAHSS) has biased composition (low complexity).

The protein belongs to the HAK/KUP transporter (TC 2.A.72.3) family. As to quaternary structure, interacts with ILK1. Phosphorylated at the N-terminus (amino acids 1-95) by CIPK23. Predominantly expressed in the roots.

Its subcellular location is the cell membrane. Functionally, high-affinity potassium transporter. Can also transport rubidium and cesium. Is essential with AKT1 for high-affinity potassium uptake in roots during seedling establishment and postgermination growth under low potassium conditions. Mediates potassium uptake by plant roots in response to low potassium conditions, by a calcium-, CBL-, and CIPK-dependent pathway. Positively regulated by the calcium sensors calcineurin B-like genes CBL1, CBL8, CBL9 and CBL10, and by phosphorylation by CIPK23. This Arabidopsis thaliana (Mouse-ear cress) protein is Potassium transporter 5 (POT5).